The sequence spans 301 residues: Methionyl-tRNA formyltransferase (301 aa).

A (6S)-5,6,7,8-tetrahydrofolate-binding site is contributed by 110-113 (SLLP).

Belongs to the Fmt family.

The catalysed reaction is L-methionyl-tRNA(fMet) + (6R)-10-formyltetrahydrofolate = N-formyl-L-methionyl-tRNA(fMet) + (6S)-5,6,7,8-tetrahydrofolate + H(+). Functionally, attaches a formyl group to the free amino group of methionyl-tRNA(fMet). The formyl group appears to play a dual role in the initiator identity of N-formylmethionyl-tRNA by promoting its recognition by IF2 and preventing the misappropriation of this tRNA by the elongation apparatus. This Anaplasma phagocytophilum (strain HZ) protein is Methionyl-tRNA formyltransferase.